We begin with the raw amino-acid sequence, 76 residues long: Bowman-Birk type proteinase inhibitor DE-4 (76 aa).

7 cysteine pairs are disulfide-bonded: Cys-15-Cys-69, Cys-16-Cys-31, Cys-19-Cys-65, Cys-21-Cys-29, Cys-39-Cys-46, Cys-43-Cys-58, and Cys-48-Cys-56.

The protein belongs to the Bowman-Birk serine protease inhibitor family.

This is Bowman-Birk type proteinase inhibitor DE-4 from Macrotyloma axillare (Perennial horse gram).